Here is a 173-residue protein sequence, read N- to C-terminus: 2-C-methyl-D-erythritol 2,4-cyclodiphosphate synthase (173 aa).

A divalent metal cation is bound by residues Asp17 and His19. 4-CDP-2-C-methyl-D-erythritol 2-phosphate-binding positions include 17 to 19 (DVH) and 49 to 50 (HS). A divalent metal cation is bound at residue His57. 4-CDP-2-C-methyl-D-erythritol 2-phosphate contacts are provided by residues 76-80 (FPNTD), 147-150 (TTTE), Phe154, and Arg157.

This sequence belongs to the IspF family. In terms of assembly, homotrimer. A divalent metal cation serves as cofactor.

The catalysed reaction is 4-CDP-2-C-methyl-D-erythritol 2-phosphate = 2-C-methyl-D-erythritol 2,4-cyclic diphosphate + CMP. It participates in isoprenoid biosynthesis; isopentenyl diphosphate biosynthesis via DXP pathway; isopentenyl diphosphate from 1-deoxy-D-xylulose 5-phosphate: step 4/6. Its function is as follows. Involved in the biosynthesis of isopentenyl diphosphate (IPP) and dimethylallyl diphosphate (DMAPP), two major building blocks of isoprenoid compounds. Catalyzes the conversion of 4-diphosphocytidyl-2-C-methyl-D-erythritol 2-phosphate (CDP-ME2P) to 2-C-methyl-D-erythritol 2,4-cyclodiphosphate (ME-CPP) with a corresponding release of cytidine 5-monophosphate (CMP). The sequence is that of 2-C-methyl-D-erythritol 2,4-cyclodiphosphate synthase from Ehrlichia chaffeensis (strain ATCC CRL-10679 / Arkansas).